The sequence spans 467 residues: Fumarate hydratase class II (467 aa).

Residues 98-100, R126, 129-132, 139-141, and T187 contribute to the substrate site; these read SGT, HPND, and SSN. H188 functions as the Proton donor/acceptor in the catalytic mechanism. The active site involves S318. Residues S319 and 324-326 each bind substrate; that span reads KVN.

It belongs to the class-II fumarase/aspartase family. Fumarase subfamily. As to quaternary structure, homotetramer.

It localises to the cytoplasm. It carries out the reaction (S)-malate = fumarate + H2O. It participates in carbohydrate metabolism; tricarboxylic acid cycle; (S)-malate from fumarate: step 1/1. Functionally, involved in the TCA cycle. Catalyzes the stereospecific interconversion of fumarate to L-malate. In Salmonella typhimurium (strain LT2 / SGSC1412 / ATCC 700720), this protein is Fumarate hydratase class II.